The primary structure comprises 112 residues: Putative pterin-4-alpha-carbinolamine dehydratase (112 aa).

Belongs to the pterin-4-alpha-carbinolamine dehydratase family.

It carries out the reaction (4aS,6R)-4a-hydroxy-L-erythro-5,6,7,8-tetrahydrobiopterin = (6R)-L-erythro-6,7-dihydrobiopterin + H2O. In Shewanella sp. (strain ANA-3), this protein is Putative pterin-4-alpha-carbinolamine dehydratase.